We begin with the raw amino-acid sequence, 573 residues long: Lauric acid 10-hydroxylase (573 aa).

The next 2 helical transmembrane spans lie at 3–23 (YVNILLGLFFTWFLVNGLMSL) and 298–318 (LFPTPFLPFIIICPFLYLLIF). C516 serves as a coordination point for heme.

It belongs to the cytochrome P450 family. Heme is required as a cofactor. In terms of tissue distribution, mostly expressed in flowers and leaves and, at low levels, in roots and stems.

Its subcellular location is the endoplasmic reticulum membrane. The catalysed reaction is an omega-methyl-medium-chain fatty acid + reduced [NADPH--hemoprotein reductase] + O2 = an omega-hydroxy-medium-chain fatty acid + oxidized [NADPH--hemoprotein reductase] + H2O + H(+). It carries out the reaction decanoate + reduced [NADPH--hemoprotein reductase] + O2 = 10-hydroxydecanoate + oxidized [NADPH--hemoprotein reductase] + H2O + H(+). The enzyme catalyses dodecanoate + reduced [NADPH--hemoprotein reductase] + O2 = 12-hydroxydodecanoate + oxidized [NADPH--hemoprotein reductase] + H2O + H(+). Its pathway is lipid metabolism; fatty acid metabolism. Functionally, cytochrome P450 hydroxylase catalyzing the conversion of decanoate (capric acid) and dodecanoate (lauric acid) to their corresponding omega-hydroxy metabolites, 10-hydroxydecanoate and 12-hydroxydodecanoate, respectively; these hydroxylated components affect plant growth, including reducing root elongation. The sequence is that of Lauric acid 10-hydroxylase from Petunia hybrida (Petunia).